The chain runs to 425 residues: UPF0597 protein Swoo_4889 (425 aa).

It belongs to the UPF0597 family.

The chain is UPF0597 protein Swoo_4889 from Shewanella woodyi (strain ATCC 51908 / MS32).